The primary structure comprises 250 residues: Proteasome subunit alpha (250 aa).

This sequence belongs to the peptidase T1A family. The 20S proteasome core is composed of 14 alpha and 14 beta subunits that assemble into four stacked heptameric rings, resulting in a barrel-shaped structure. The two inner rings, each composed of seven catalytic beta subunits, are sandwiched by two outer rings, each composed of seven alpha subunits. The catalytic chamber with the active sites is on the inside of the barrel. Has a gated structure, the ends of the cylinder being occluded by the N-termini of the alpha-subunits. Is capped at one or both ends by the proteasome regulatory ATPase, PAN.

Its subcellular location is the cytoplasm. The formation of the proteasomal ATPase PAN-20S proteasome complex, via the docking of the C-termini of PAN into the intersubunit pockets in the alpha-rings, triggers opening of the gate for substrate entry. Interconversion between the open-gate and close-gate conformations leads to a dynamic regulation of the 20S proteasome proteolysis activity. Functionally, component of the proteasome core, a large protease complex with broad specificity involved in protein degradation. This is Proteasome subunit alpha from Haloquadratum walsbyi (strain DSM 16790 / HBSQ001).